The chain runs to 304 residues: Small ribosomal subunit biogenesis GTPase RsgA (304 aa).

Residues 70-229 (HNELNRPNIA…IADTPGFSKL (160 aa)) form the CP-type G domain. Residues 119 to 122 (TKID) and 172 to 180 (GQTGVGKST) each bind GTP. Zn(2+) is bound by residues C253, C259, H261, and C267.

This sequence belongs to the TRAFAC class YlqF/YawG GTPase family. RsgA subfamily. In terms of assembly, monomer. Associates with 30S ribosomal subunit, binds 16S rRNA. Zn(2+) serves as cofactor.

It localises to the cytoplasm. One of several proteins that assist in the late maturation steps of the functional core of the 30S ribosomal subunit. Helps release RbfA from mature subunits. May play a role in the assembly of ribosomal proteins into the subunit. Circularly permuted GTPase that catalyzes slow GTP hydrolysis, GTPase activity is stimulated by the 30S ribosomal subunit. This chain is Small ribosomal subunit biogenesis GTPase RsgA, found in Phytoplasma mali (strain AT).